A 191-amino-acid chain; its full sequence is Ribosome maturation factor RimM (191 aa).

The 78-residue stretch at 107 to 184 (EDDEWHQDDL…LVLVSPPPGL (78 aa)) folds into the PRC barrel domain.

This sequence belongs to the RimM family. Binds ribosomal protein uS19.

The protein resides in the cytoplasm. Its function is as follows. An accessory protein needed during the final step in the assembly of 30S ribosomal subunit, possibly for assembly of the head region. Essential for efficient processing of 16S rRNA. May be needed both before and after RbfA during the maturation of 16S rRNA. It has affinity for free ribosomal 30S subunits but not for 70S ribosomes. The chain is Ribosome maturation factor RimM from Kocuria rhizophila (strain ATCC 9341 / DSM 348 / NBRC 103217 / DC2201).